A 402-amino-acid chain; its full sequence is Deoxyguanosinetriphosphate triphosphohydrolase-like protein (402 aa).

Residues 69-217 (RLTHSLEVAQ…AAIADDIAYD (149 aa)) form the HD domain.

The protein belongs to the dGTPase family. Type 2 subfamily.

The sequence is that of Deoxyguanosinetriphosphate triphosphohydrolase-like protein from Bradyrhizobium diazoefficiens (strain JCM 10833 / BCRC 13528 / IAM 13628 / NBRC 14792 / USDA 110).